A 971-amino-acid chain; its full sequence is uncharacterized protein (971 aa).

Transmembrane regions (helical) follow at residues 11-31 (WLLKIGIILVLAFLGLFGIIF), 516-536 (FASSFIALGVIILLATIALGI), 547-567 (LALALSAISSLAFFSAVGGVV), 569-589 (VFSFVGIFFVVAVNIINLITL), 615-635 (FFTMIETHICWLLSALVVIYL), 651-671 (AITSYFLNYGLGVILVWLFVS), 727-747 (LLFIWLTVLAFGVVMLGLYLG), 763-783 (STGIMLGVGVISLLYLLYSLP), 795-815 (IALILLAAGLFGAMYLANFIF), 817-837 (IDQSTIQLIIFVYLFWLFFQA), 878-898 (IGSSVLILLFIVYAAFNFGGI), 900-920 (GTINLVIFYLIAIVALFSVFV), and 923-943 (LPLFSFGLINGWLSPYNYVQI).

Its subcellular location is the cell membrane. This is an uncharacterized protein from Mycoplasma pneumoniae (strain ATCC 29342 / M129 / Subtype 1) (Mycoplasmoides pneumoniae).